A 61-amino-acid polypeptide reads, in one-letter code: Short neurotoxin 1 (61 aa).

Positions 1 to 16 are enriched in polar residues; it reads LECHNQQSSQPPTTKS. Residues 1–20 form a disordered region; the sequence is LECHNQQSSQPPTTKSCPGD. Intrachain disulfides connect cysteine 3-cysteine 23, cysteine 17-cysteine 40, cysteine 42-cysteine 53, and cysteine 54-cysteine 59.

This sequence belongs to the three-finger toxin family. Short-chain subfamily. Type I alpha-neurotoxin sub-subfamily. Expressed by the venom gland.

The protein resides in the secreted. Its function is as follows. Binds to muscle nicotinic acetylcholine receptor (nAChR) and inhibit acetylcholine from binding to the receptor, thereby impairing neuromuscular transmission. In Hemachatus haemachatus (Rinkhals), this protein is Short neurotoxin 1.